We begin with the raw amino-acid sequence, 265 residues long: 4-hydroxy-tetrahydrodipicolinate reductase (265 aa).

Residues 7–12 (GASGRM), Asp-33, 96–98 (GTT), and 120–123 (AANF) each bind NAD(+). The active-site Proton donor/acceptor is the His-153. (S)-2,3,4,5-tetrahydrodipicolinate is bound at residue His-154. The active-site Proton donor is the Lys-157. Residue 163–164 (GT) coordinates (S)-2,3,4,5-tetrahydrodipicolinate.

This sequence belongs to the DapB family.

It is found in the cytoplasm. The catalysed reaction is (S)-2,3,4,5-tetrahydrodipicolinate + NAD(+) + H2O = (2S,4S)-4-hydroxy-2,3,4,5-tetrahydrodipicolinate + NADH + H(+). It carries out the reaction (S)-2,3,4,5-tetrahydrodipicolinate + NADP(+) + H2O = (2S,4S)-4-hydroxy-2,3,4,5-tetrahydrodipicolinate + NADPH + H(+). It functions in the pathway amino-acid biosynthesis; L-lysine biosynthesis via DAP pathway; (S)-tetrahydrodipicolinate from L-aspartate: step 4/4. Its function is as follows. Catalyzes the conversion of 4-hydroxy-tetrahydrodipicolinate (HTPA) to tetrahydrodipicolinate. In Cupriavidus taiwanensis (strain DSM 17343 / BCRC 17206 / CCUG 44338 / CIP 107171 / LMG 19424 / R1) (Ralstonia taiwanensis (strain LMG 19424)), this protein is 4-hydroxy-tetrahydrodipicolinate reductase.